The following is a 298-amino-acid chain: Inosose dehydratase (298 aa).

Belongs to the IolE/MocC family. It depends on glutathione as a cofactor. The cofactor is Co(2+). Mn(2+) is required as a cofactor.

It carries out the reaction scyllo-inosose = 3D-3,5/4-trihydroxycyclohexane-1,2-dione + H2O. It functions in the pathway polyol metabolism; myo-inositol degradation into acetyl-CoA; acetyl-CoA from myo-inositol: step 2/7. Catalyzes the dehydration of inosose (2-keto-myo-inositol, 2KMI or 2,4,6/3,5-pentahydroxycyclohexanone) to 3D-(3,5/4)-trihydroxycyclohexane-1,2-dione (D-2,3-diketo-4-deoxy-epi-inositol). In Bacillus anthracis (strain CDC 684 / NRRL 3495), this protein is Inosose dehydratase.